The primary structure comprises 451 residues: Tubulin alpha-1A chain (451 aa).

GTP is bound by residues glycine 10, glutamine 11, alanine 12, and glutamine 15. An N6-acetyllysine modification is found at lysine 40. Residues glutamate 71, alanine 99, serine 140, glycine 143, glycine 144, threonine 145, glycine 146, threonine 179, glutamate 183, asparagine 206, tyrosine 224, asparagine 228, and leucine 252 each contribute to the GTP site. Glutamate 71 is a binding site for Mg(2+). Glutamate 254 is a catalytic residue. The residue at position 282 (tyrosine 282) is a 3'-nitrotyrosine. Position 439 is a phosphoserine (serine 439). 5-glutamyl polyglutamate is present on residues glutamate 443 and glutamate 445. 3'-nitrotyrosine is present on tyrosine 451.

The protein belongs to the tubulin family. As to quaternary structure, heterodimer of alpha- and beta-tubulin. A typical microtubule is a hollow water-filled tube with an outer diameter of 25 nm and an inner diameter of 15 nM. Alpha-beta heterodimers associate head-to-tail to form protofilaments running lengthwise along the microtubule wall with the beta-tubulin subunit facing the microtubule plus end conferring a structural polarity. Microtubules usually have 13 protofilaments but different protofilament numbers can be found in some organisms and specialized cells. Interacts with gamma-tubulin; the interaction allows microtubules to nucleate from the gamma-tubulin ring complex (gTuRC). Nascent microtubule interacts (via alpha-tubulin MREC motif) with TTC5/STRAP; this interaction may result in tubulin mRNA-targeted degradation. Component of sperm flagellar doublet microtubules. Mg(2+) serves as cofactor. Some glutamate residues at the C-terminus are polyglycylated, resulting in polyglycine chains on the gamma-carboxyl group. Glycylation is mainly limited to tubulin incorporated into axonemes (cilia and flagella) whereas glutamylation is prevalent in neuronal cells, centrioles, axonemes, and the mitotic spindle. Both modifications can coexist on the same protein on adjacent residues, and lowering polyglycylation levels increases polyglutamylation, and reciprocally. Cilia and flagella glycylation is required for their stability and maintenance. Flagella glycylation controls sperm motility. In terms of processing, some glutamate residues at the C-terminus are polyglutamylated, resulting in polyglutamate chains on the gamma-carboxyl group. Polyglutamylation plays a key role in microtubule severing by spastin (SPAST). SPAST preferentially recognizes and acts on microtubules decorated with short polyglutamate tails: severing activity by SPAST increases as the number of glutamates per tubulin rises from one to eight, but decreases beyond this glutamylation threshold. Glutamylation is also involved in cilia motility. Post-translationally, acetylation of alpha chains at Lys-40 is located inside the microtubule lumen. This modification has been correlated with increased microtubule stability, intracellular transport and ciliary assembly. Methylation of alpha chains at Lys-40 is found in mitotic microtubules and is required for normal mitosis and cytokinesis contributing to genomic stability. In terms of processing, nitration of Tyr-451 is irreversible and interferes with normal dynein intracellular distribution. Post-translationally, undergoes a tyrosination/detyrosination cycle, the cyclic removal and re-addition of a C-terminal tyrosine residue by the enzymes tubulin tyrosine carboxypeptidase (MATCAP1, VASH1 or VASH2) and tubulin tyrosine ligase (TTL), respectively. Tyrosination promotes microtubule interaction with CAP-Gly domain-containing proteins such as CLIP1, CLIP2 and DCTN1. Tyrosination regulates the initiation of dynein-dynactin motility via interaction with DCTN1, which brings the dynein-dynactin complex into contact with microtubules. In neurons, tyrosinated tubulins mediate the initiation of retrograde vesicle transport. In terms of processing, detyrosination is involved in metaphase plate congression by guiding chromosomes during mitosis: detyrosination promotes interaction with CENPE, promoting pole-proximal transport of chromosomes toward the equator. Detyrosination increases microtubules-dependent mechanotransduction in dystrophic cardiac and skeletal muscle. In cardiomyocytes, detyrosinated microtubules are required to resist to contractile compression during contraction: detyrosination promotes association with desmin (DES) at force-generating sarcomeres, leading to buckled microtubules and mechanical resistance to contraction.

Its subcellular location is the cytoplasm. The protein resides in the cytoskeleton. It localises to the flagellum axoneme. The catalysed reaction is GTP + H2O = GDP + phosphate + H(+). In terms of biological role, tubulin is the major constituent of microtubules, protein filaments consisting of alpha- and beta-tubulin heterodimers. Microtubules grow by the addition of GTP-tubulin dimers to the microtubule end, where a stabilizing cap forms. Below the cap, tubulin dimers are in GDP-bound state, owing to GTPase activity of alpha-tubulin. In Sus scrofa (Pig), this protein is Tubulin alpha-1A chain (TUBA1A).